The chain runs to 489 residues: 3-octaprenyl-4-hydroxybenzoate carboxy-lyase (489 aa).

Asn172 provides a ligand contact to Mn(2+). Prenylated FMN contacts are provided by residues 175 to 177, 189 to 191, and 194 to 195; these read IYR, RWL, and RG. Residue Glu238 participates in Mn(2+) binding. Asp287 serves as the catalytic Proton donor.

Belongs to the UbiD family. As to quaternary structure, homohexamer. Requires prenylated FMN as cofactor. Mn(2+) serves as cofactor.

It is found in the cell membrane. The enzyme catalyses a 4-hydroxy-3-(all-trans-polyprenyl)benzoate + H(+) = a 2-(all-trans-polyprenyl)phenol + CO2. Its pathway is cofactor biosynthesis; ubiquinone biosynthesis. Functionally, catalyzes the decarboxylation of 3-octaprenyl-4-hydroxy benzoate to 2-octaprenylphenol, an intermediate step in ubiquinone biosynthesis. The protein is 3-octaprenyl-4-hydroxybenzoate carboxy-lyase of Psychromonas ingrahamii (strain DSM 17664 / CCUG 51855 / 37).